A 506-amino-acid polypeptide reads, in one-letter code: 7,8-dihydro-6-hydroxymethylpterin dimethyltransferase (506 aa).

6 residues coordinate [4Fe-4S] cluster: C73, C77, C80, C98, C102, and C105. The Radical SAM core domain occupies 82-300 (NHKSTTILAN…FIKLVEEQTD (219 aa)).

It belongs to the radical SAM superfamily. Requires [4Fe-4S] cluster as cofactor. S-adenosyl-L-methionine is required as a cofactor.

Its pathway is cofactor biosynthesis; 5,6,7,8-tetrahydromethanopterin biosynthesis. Its function is as follows. Is responsible for the addition of methyl groups at C-7 and C-9 of the pterin ring during methanopterin (MPT) biosynthesis. Catalyzes methylation of 7,8-dihydro-6-hydroxymethylpterin, likely using methylenetetrahydromethanopterin as a methyl group donor, via a radical-based mechanism. In Methanocaldococcus jannaschii (strain ATCC 43067 / DSM 2661 / JAL-1 / JCM 10045 / NBRC 100440) (Methanococcus jannaschii), this protein is 7,8-dihydro-6-hydroxymethylpterin dimethyltransferase.